The following is a 124-amino-acid chain: Small ribosomal subunit protein uS13 (124 aa).

The interval 95 to 124 (GLPVRGQRTKTNARTRKGPKRTIAGKKKAR) is disordered.

This sequence belongs to the universal ribosomal protein uS13 family. Part of the 30S ribosomal subunit. Forms a loose heterodimer with protein S19. Forms two bridges to the 50S subunit in the 70S ribosome.

Functionally, located at the top of the head of the 30S subunit, it contacts several helices of the 16S rRNA. In the 70S ribosome it contacts the 23S rRNA (bridge B1a) and protein L5 of the 50S subunit (bridge B1b), connecting the 2 subunits; these bridges are implicated in subunit movement. Contacts the tRNAs in the A and P-sites. In Mycobacterium marinum (strain ATCC BAA-535 / M), this protein is Small ribosomal subunit protein uS13.